A 117-amino-acid polypeptide reads, in one-letter code: Probable non-functional immunoglobulin heavy variable 7-81 (117 aa).

The signal sequence occupies residues 1 to 19; the sequence is MDWTWSILFLVAAATGTYS. Residues 20–44 are framework-1; it reads QVQLVQSGHEVKQPGASVKVSCKAS. The region spanning 20-117 is the Ig-like domain; the sequence is QVQLVQSGHE…EDMAMYYCAR (98 aa). C41 and C115 form a disulfide bridge. The segment at 45 to 52 is complementarity-determining-1; the sequence is GYSFTTYG. The tract at residues 53–69 is framework-2; sequence MNWVPQAPGQGLEWMGW. The segment at 70 to 77 is complementarity-determining-2; it reads FNTYTGNP. The N-linked (GlcNAc...) asparagine glycan is linked to N76. The framework-3 stretch occupies residues 78-115; sequence TYAQGFTGRFVFSMDTSASTAYLQISSLKAEDMAMYYC. The segment at 116 to 117 is complementarity-determining-3; it reads AR.

As to quaternary structure, immunoglobulins are composed of two identical heavy chains and two identical light chains; disulfide-linked.

Its subcellular location is the secreted. It is found in the cell membrane. Its function is as follows. Probable non-functional open reading frame (ORF) of V region of the variable domain of immunoglobulin heavy chains. Non-functional ORF generally cannot participate in the synthesis of a productive immunoglobulin chain due to altered V-(D)-J or switch recombination and/or splicing site (at mRNA level) and/or conserved amino acid change (protein level). Immunoglobulins, also known as antibodies, are membrane-bound or secreted glycoproteins produced by B lymphocytes. In the recognition phase of humoral immunity, the membrane-bound immunoglobulins serve as receptors which, upon binding of a specific antigen, trigger the clonal expansion and differentiation of B lymphocytes into immunoglobulins-secreting plasma cells. Secreted immunoglobulins mediate the effector phase of humoral immunity, which results in the elimination of bound antigens. The antigen binding site is formed by the variable domain of one heavy chain, together with that of its associated light chain. Thus, each immunoglobulin has two antigen binding sites with remarkable affinity for a particular antigen. The variable domains are assembled by a process called V-(D)-J rearrangement and can then be subjected to somatic hypermutations which, after exposure to antigen and selection, allow affinity maturation for a particular antigen. This Homo sapiens (Human) protein is Probable non-functional immunoglobulin heavy variable 7-81.